The primary structure comprises 163 residues: Nucleotide-binding protein SYNPCC7002_A1983 (163 aa).

It belongs to the YajQ family.

In terms of biological role, nucleotide-binding protein. This chain is Nucleotide-binding protein SYNPCC7002_A1983, found in Picosynechococcus sp. (strain ATCC 27264 / PCC 7002 / PR-6) (Agmenellum quadruplicatum).